The sequence spans 357 residues: Dual-specificity RNA methyltransferase RlmN (357 aa).

Catalysis depends on E89, which acts as the Proton acceptor. The region spanning 109–340 (EGEKYTVCVS…CTIRESKALD (232 aa)) is the Radical SAM core domain. Cysteines 116 and 345 form a disulfide. Positions 123, 127, and 130 each coordinate [4Fe-4S] cluster. S-adenosyl-L-methionine-binding positions include 173–174 (GE), S203, 226–228 (SLH), and N302. The active-site S-methylcysteine intermediate is C345.

It belongs to the radical SAM superfamily. RlmN family. Requires [4Fe-4S] cluster as cofactor.

The protein resides in the cytoplasm. The catalysed reaction is adenosine(2503) in 23S rRNA + 2 reduced [2Fe-2S]-[ferredoxin] + 2 S-adenosyl-L-methionine = 2-methyladenosine(2503) in 23S rRNA + 5'-deoxyadenosine + L-methionine + 2 oxidized [2Fe-2S]-[ferredoxin] + S-adenosyl-L-homocysteine. The enzyme catalyses adenosine(37) in tRNA + 2 reduced [2Fe-2S]-[ferredoxin] + 2 S-adenosyl-L-methionine = 2-methyladenosine(37) in tRNA + 5'-deoxyadenosine + L-methionine + 2 oxidized [2Fe-2S]-[ferredoxin] + S-adenosyl-L-homocysteine. In terms of biological role, specifically methylates position 2 of adenine 2503 in 23S rRNA and position 2 of adenine 37 in tRNAs. m2A2503 modification seems to play a crucial role in the proofreading step occurring at the peptidyl transferase center and thus would serve to optimize ribosomal fidelity. The protein is Dual-specificity RNA methyltransferase RlmN of Helicobacter pylori (strain J99 / ATCC 700824) (Campylobacter pylori J99).